The following is a 303-amino-acid chain: 1D-myo-inositol 2-acetamido-2-deoxy-alpha-D-glucopyranoside deacetylase (303 aa).

Zn(2+) contacts are provided by His13, Asp16, and His147.

The protein belongs to the MshB deacetylase family. Zn(2+) serves as cofactor.

It catalyses the reaction 1D-myo-inositol 2-acetamido-2-deoxy-alpha-D-glucopyranoside + H2O = 1D-myo-inositol 2-amino-2-deoxy-alpha-D-glucopyranoside + acetate. Catalyzes the deacetylation of 1D-myo-inositol 2-acetamido-2-deoxy-alpha-D-glucopyranoside (GlcNAc-Ins) in the mycothiol biosynthesis pathway. The sequence is that of 1D-myo-inositol 2-acetamido-2-deoxy-alpha-D-glucopyranoside deacetylase from Mycobacterium tuberculosis (strain ATCC 25177 / H37Ra).